We begin with the raw amino-acid sequence, 417 residues long: Tyrosine--tRNA ligase (417 aa).

Y40 provides a ligand contact to L-tyrosine. The short motif at 45-54 (ATAASLHVGH) is the 'HIGH' region element. L-tyrosine-binding residues include Y177 and Q181. The 'KMSKS' region signature appears at 237–241 (KMGKS). K240 is a binding site for ATP. An S4 RNA-binding domain is found at 351–414 (ISVVQLITRS…AGRKRHALIK (64 aa)).

This sequence belongs to the class-I aminoacyl-tRNA synthetase family. TyrS type 1 subfamily. Homodimer.

The protein localises to the cytoplasm. The catalysed reaction is tRNA(Tyr) + L-tyrosine + ATP = L-tyrosyl-tRNA(Tyr) + AMP + diphosphate + H(+). Catalyzes the attachment of tyrosine to tRNA(Tyr) in a two-step reaction: tyrosine is first activated by ATP to form Tyr-AMP and then transferred to the acceptor end of tRNA(Tyr). This chain is Tyrosine--tRNA ligase, found in Dinoroseobacter shibae (strain DSM 16493 / NCIMB 14021 / DFL 12).